The following is a 106-amino-acid chain: MAPKQPNTGLFVGLNKGHIVTKKELAPRPSDRKGKTSKRTHFVRNLIREVAGFXPYEKRITELLKVGKDKRALKVRQEKVGHSQESKEEERGDVQCSPPDEGWWWY.

A compositionally biased stretch (basic and acidic residues) spans 75 to 93 (VRQEKVGHSQESKEEERGD). Residues 75-106 (VRQEKVGHSQESKEEERGDVQCSPPDEGWWWY) form a disordered region.

This sequence belongs to the eukaryotic ribosomal protein eL36 family.

The sequence is that of Large ribosomal subunit protein eL36 (RPL36) from Daucus carota (Wild carrot).